Here is a 188-residue protein sequence, read N- to C-terminus: Peptidyl-tRNA hydrolase (188 aa).

A tRNA-binding site is contributed by Tyr-14. His-19 (proton acceptor) is an active-site residue. The tRNA site is built by Tyr-64, Asn-66, and Asn-112.

It belongs to the PTH family. Monomer.

It is found in the cytoplasm. It carries out the reaction an N-acyl-L-alpha-aminoacyl-tRNA + H2O = an N-acyl-L-amino acid + a tRNA + H(+). Functionally, hydrolyzes ribosome-free peptidyl-tRNAs (with 1 or more amino acids incorporated), which drop off the ribosome during protein synthesis, or as a result of ribosome stalling. In terms of biological role, catalyzes the release of premature peptidyl moieties from peptidyl-tRNA molecules trapped in stalled 50S ribosomal subunits, and thus maintains levels of free tRNAs and 50S ribosomes. The polypeptide is Peptidyl-tRNA hydrolase (Clostridium perfringens (strain SM101 / Type A)).